The following is a 236-amino-acid chain: 1-(5-phosphoribosyl)-5-[(5-phosphoribosylamino)methylideneamino] imidazole-4-carboxamide isomerase (236 aa).

D8 acts as the Proton acceptor in catalysis. D129 functions as the Proton donor in the catalytic mechanism.

It belongs to the HisA/HisF family.

The protein localises to the cytoplasm. It carries out the reaction 1-(5-phospho-beta-D-ribosyl)-5-[(5-phospho-beta-D-ribosylamino)methylideneamino]imidazole-4-carboxamide = 5-[(5-phospho-1-deoxy-D-ribulos-1-ylimino)methylamino]-1-(5-phospho-beta-D-ribosyl)imidazole-4-carboxamide. The protein operates within amino-acid biosynthesis; L-histidine biosynthesis; L-histidine from 5-phospho-alpha-D-ribose 1-diphosphate: step 4/9. This is 1-(5-phosphoribosyl)-5-[(5-phosphoribosylamino)methylideneamino] imidazole-4-carboxamide isomerase from Methanospirillum hungatei JF-1 (strain ATCC 27890 / DSM 864 / NBRC 100397 / JF-1).